A 180-amino-acid chain; its full sequence is Oligoribonuclease (180 aa).

The Exonuclease domain maps to 7 to 170; sequence LIWIDLEMTG…DDIRESIAEL (164 aa). Residue Tyr128 is part of the active site.

This sequence belongs to the oligoribonuclease family.

It is found in the cytoplasm. In terms of biological role, 3'-to-5' exoribonuclease specific for small oligoribonucleotides. In Ectopseudomonas mendocina (strain ymp) (Pseudomonas mendocina), this protein is Oligoribonuclease.